We begin with the raw amino-acid sequence, 479 residues long: Protein TRIGALACTOSYLDIACYLGLYCEROL 4, chloroplastic (479 aa).

A transmembrane helix spans residues 288–310; sequence VFLSSPHVAVSGIIGSVMTAAFG.

As to quaternary structure, homodimer. Forms dimeric beta-barrel. Interacts with TGD5.

Its subcellular location is the plastid. It localises to the chloroplast outer membrane. It is found in the endoplasmic reticulum. In terms of biological role, involved in lipid transfer from the endoplasmic reticulum (ER) to plastids. Specifically binds phosphatidic acid (PtdOH). This is Protein TRIGALACTOSYLDIACYLGLYCEROL 4, chloroplastic from Arabidopsis thaliana (Mouse-ear cress).